A 450-amino-acid chain; its full sequence is Tubulin beta-1 chain (450 aa).

GTP contacts are provided by Gln11, Glu69, Ser138, Gly142, Thr143, Gly144, Asn204, and Asn226. Mg(2+) is bound at residue Glu69. Residues 426–450 (QDATADEDEYGEEEGDEEEYGQHDI) are disordered. The segment covering 429–444 (TADEDEYGEEEGDEEE) has biased composition (acidic residues).

This sequence belongs to the tubulin family. As to quaternary structure, dimer of alpha and beta chains. A typical microtubule is a hollow water-filled tube with an outer diameter of 25 nm and an inner diameter of 15 nM. Alpha-beta heterodimers associate head-to-tail to form protofilaments running lengthwise along the microtubule wall with the beta-tubulin subunit facing the microtubule plus end conferring a structural polarity. Microtubules usually have 13 protofilaments but different protofilament numbers can be found in some organisms and specialized cells. Mg(2+) is required as a cofactor.

The protein localises to the cytoplasm. Its subcellular location is the cytoskeleton. In terms of biological role, tubulin is the major constituent of microtubules, a cylinder consisting of laterally associated linear protofilaments composed of alpha- and beta-tubulin heterodimers. Microtubules grow by the addition of GTP-tubulin dimers to the microtubule end, where a stabilizing cap forms. Below the cap, tubulin dimers are in GDP-bound state, owing to GTPase activity of alpha-tubulin. This Pisum sativum (Garden pea) protein is Tubulin beta-1 chain (TUBB1).